The chain runs to 422 residues: Elongation factor 1-alpha (422 aa).

Residues 5–221 form the tr-type G domain; the sequence is KPHMNLAVIG…NSLKEPEKPS (217 aa). Residues 14–21 are G1; it reads GHIDHGKS. 14–21 contacts GTP; it reads GHIDHGKS. Mg(2+) is bound at residue Ser-21. Positions 70 to 74 are G2; that stretch reads GITID. The tract at residues 91-94 is G3; that stretch reads DCPG. GTP contacts are provided by residues 91 to 95 and 146 to 149; these read DCPGH and NKMD. The tract at residues 146 to 149 is G4; it reads NKMD. A G5 region spans residues 185-187; it reads SAF.

The protein belongs to the TRAFAC class translation factor GTPase superfamily. Classic translation factor GTPase family. EF-Tu/EF-1A subfamily.

The protein resides in the cytoplasm. It catalyses the reaction GTP + H2O = GDP + phosphate + H(+). GTP hydrolase that promotes the GTP-dependent binding of aminoacyl-tRNA to the A-site of ribosomes during protein biosynthesis. The protein is Elongation factor 1-alpha of Methanosarcina mazei (strain ATCC BAA-159 / DSM 3647 / Goe1 / Go1 / JCM 11833 / OCM 88) (Methanosarcina frisia).